Reading from the N-terminus, the 786-residue chain is AT-rich interactive domain-containing protein 3 (786 aa).

Residues 1–16 are compositionally biased toward low complexity; sequence MENLTEIESTMESLTE. Disordered stretches follow at residues 1-182, 199-251, and 395-420; these read MENL…HHAD, SGDH…IPAN, and DTTV…NSSA. Composition is skewed to basic and acidic residues over residues 18 to 64 and 87 to 97; these read ESER…HEDS and DLPKIDDEKNS. Low complexity predominate over residues 130-139; sequence ENIVSSEVSS. Composition is skewed to basic and acidic residues over residues 141–156, 169–182, 199–219, 234–248, and 402–416; these read ILKD…RDTA, KLSE…HHAD, SGDH…ENQS, AEER…HKEI, and NNKD…ERQD. The region spanning 494–585 is the ARID domain; the sequence is EEDQSAFMKE…ALLEYERHKV (92 aa). A disordered region spans residues 606 to 638; it reads QASGSGRARRDAASRAMQGWHSQRLNGNGEVSD. The region spanning 686–786 is the sHSP domain; that stretch reads VTVVDVGPPA…FVRVPLEQLE (101 aa).

This sequence belongs to the small heat shock protein (HSP20) family.

It is found in the nucleus. This is AT-rich interactive domain-containing protein 3 (ARID3) from Arabidopsis thaliana (Mouse-ear cress).